The chain runs to 456 residues: Adenylosuccinate synthetase isozyme 1 (456 aa).

The tract at residues 1 to 30 (MSSGWSQNDHRSYSNPPPVSGKRPRNDSGN) is disordered. GTP is bound by residues 41 to 47 (GDEGKGK) and 69 to 71 (GHT). Aspartate 42 serves as the catalytic Proton acceptor. The Mg(2+) site is built by aspartate 42 and glycine 69. Aspartate 42 is a substrate binding site. IMP is bound by residues 42–45 (DEGK) and 67–70 (NAGH). The active-site Proton donor is the histidine 70. Position 130 is a phosphoserine (serine 130). 5 residues coordinate IMP: threonine 162, arginine 176, asparagine 255, threonine 270, and arginine 334. 330–336 (VTTGRKR) is a binding site for substrate. Residues arginine 336, 362–364 (KLD), and 444–447 (GVGK) contribute to the GTP site.

It belongs to the adenylosuccinate synthetase family. As to quaternary structure, homodimer. The cofactor is Mg(2+).

The protein resides in the cytoplasm. It carries out the reaction IMP + L-aspartate + GTP = N(6)-(1,2-dicarboxyethyl)-AMP + GDP + phosphate + 2 H(+). The protein operates within purine metabolism; AMP biosynthesis via de novo pathway; AMP from IMP: step 1/2. Its function is as follows. Component of the purine nucleotide cycle (PNC), which interconverts IMP and AMP to regulate the nucleotide levels in various tissues, and which contributes to glycolysis and ammoniagenesis. Catalyzes the first committed step in the biosynthesis of AMP from IMP. The chain is Adenylosuccinate synthetase isozyme 1 (adss1) from Danio rerio (Zebrafish).